We begin with the raw amino-acid sequence, 1320 residues long: Poly [ADP-ribose] polymerase tankyrase-1 (1320 aa).

Residues 1–15 (MAASRRSQHHHHHHQ) show a composition bias toward basic residues. Disordered stretches follow at residues 1-88 (MAAS…DGAV) and 111-152 (AGGG…AAGV). Residues 25 to 46 (SAPPPPPPPPLSPGLAPGPTPA) are compositionally biased toward pro residues. The span at 69-82 (DGSRDPPDRPRSPD) shows a compositional bias: basic and acidic residues. Positions 120-152 (NSASSASSPTSSSSSSPSSPGSSLAESPEAAGV) are enriched in low complexity. ANK repeat units follow at residues 174 to 202 (GALR…NVNA), 208 to 237 (RKSS…NVHA), 241 to 270 (GGLI…DPNA), 274 to 303 (WNYT…DPNI), 361 to 390 (RKST…DVHA), 394 to 423 (GGLV…CVNA), 427 to 456 (WQFT…DPTL), 514 to 546 (SHET…NVNE), 550 to 579 (DFMT…KMNA), 583 to 612 (LGQT…DPSI), 676 to 705 (RHST…DVHA), 709 to 738 (GGLV…SVNV), 742 to 771 (WKFT…DPTK), 775 to 803 (DGNT…LLDA), 829 to 858 (RNST…DVNA), 862 to 891 (GGLI…CVNA), 895 to 924 (WAFT…DPTM), and 928 to 957 (EGQT…LPTC). The SAM domain occupies 1019 to 1082 (GLDMNISQFL…IKGVERLLGG (64 aa)). Positions 1105-1310 (APEDKEYQSV…YQIMKPEAPS (206 aa)) constitute a PARP catalytic domain. The Zn(2+) site is built by Cys-1227, His-1230, Cys-1235, and Cys-1238.

Belongs to the ARTD/PARP family. As to quaternary structure, oligomerizes and associates with TNKS2. Interacts with the cytoplasmic domain of LNPEP/Otase in SLC2A4/GLUT4-vesicles. Binds to the N-terminus of telomeric TERF1 via the ANK repeats. Found in a complex with POT1; TERF1 and TINF2. Interacts with AXIN1. Interacts with AXIN2. Interacts with BLZF1 and CASC3. Interacts with NUMA1. Phosphorylated on serine residues by MAPK kinases upon insulin stimulation. Phosphorylated during mitosis. In terms of processing, ubiquitinated by RNF146 when auto-poly-ADP-ribosylated, leading to its degradation. Post-translationally, ADP-ribosylated (-auto). Poly-ADP-ribosylated protein is recognized by RNF146, followed by ubiquitination.

It localises to the cytoplasm. The protein resides in the golgi apparatus membrane. Its subcellular location is the cytoskeleton. The protein localises to the microtubule organizing center. It is found in the centrosome. It localises to the nucleus. The protein resides in the nuclear pore complex. Its subcellular location is the chromosome. The protein localises to the telomere. It is found in the spindle pole. It carries out the reaction NAD(+) + (ADP-D-ribosyl)n-acceptor = nicotinamide + (ADP-D-ribosyl)n+1-acceptor + H(+).. It catalyses the reaction L-aspartyl-[protein] + NAD(+) = 4-O-(ADP-D-ribosyl)-L-aspartyl-[protein] + nicotinamide. The catalysed reaction is L-glutamyl-[protein] + NAD(+) = 5-O-(ADP-D-ribosyl)-L-glutamyl-[protein] + nicotinamide. Functionally, poly-ADP-ribosyltransferase involved in various processes such as Wnt signaling pathway, telomere length and vesicle trafficking. Acts as an activator of the Wnt signaling pathway by mediating poly-ADP-ribosylation (PARsylation) of AXIN1 and AXIN2, 2 key components of the beta-catenin destruction complex: poly-ADP-ribosylated target proteins are recognized by RNF146, which mediates their ubiquitination and subsequent degradation. Also mediates PARsylation of BLZF1 and CASC3, followed by recruitment of RNF146 and subsequent ubiquitination. Mediates PARsylation of TERF1, thereby contributing to the regulation of telomere length. Involved in centrosome maturation during prometaphase by mediating PARsylation of HEPACAM2/MIKI. May also regulate vesicle trafficking and modulate the subcellular distribution of SLC2A4/GLUT4-vesicles. May be involved in spindle pole assembly through PARsylation of NUMA1. Stimulates 26S proteasome activity. In Mus musculus (Mouse), this protein is Poly [ADP-ribose] polymerase tankyrase-1 (Tnks).